The primary structure comprises 378 residues: UDP-N-acetylenolpyruvoylglucosamine reductase (378 aa).

An FAD-binding PCMH-type domain is found at 15 to 185; it reads VGGTPERLLE…LSVDLELADH (171 aa). Residue arginine 163 is part of the active site. The active-site Proton donor is the serine 248. The active site involves glutamate 370.

This sequence belongs to the MurB family. The cofactor is FAD.

The protein resides in the cytoplasm. It catalyses the reaction UDP-N-acetyl-alpha-D-muramate + NADP(+) = UDP-N-acetyl-3-O-(1-carboxyvinyl)-alpha-D-glucosamine + NADPH + H(+). It participates in cell wall biogenesis; peptidoglycan biosynthesis. Its function is as follows. Cell wall formation. The polypeptide is UDP-N-acetylenolpyruvoylglucosamine reductase (Leifsonia xyli subsp. xyli (strain CTCB07)).